Consider the following 138-residue polypeptide: UPF0310 protein MAV_1800 (138 aa).

This sequence belongs to the UPF0310 family.

The protein is UPF0310 protein MAV_1800 of Mycobacterium avium (strain 104).